The primary structure comprises 103 residues: Large ribosomal subunit protein bL21 (103 aa).

Belongs to the bacterial ribosomal protein bL21 family. As to quaternary structure, part of the 50S ribosomal subunit. Contacts protein L20.

Functionally, this protein binds to 23S rRNA in the presence of protein L20. The polypeptide is Large ribosomal subunit protein bL21 (Pectobacterium atrosepticum (strain SCRI 1043 / ATCC BAA-672) (Erwinia carotovora subsp. atroseptica)).